The chain runs to 786 residues: Endonuclease MutS2 (786 aa).

333 to 340 contributes to the ATP binding site; it reads GPNTGGKT. A disordered region spans residues 682 to 709; the sequence is EKIKPSKQSAAQRPVVKVSGGGMSGPST. Residues 711–786 form the Smr domain; that stretch reads LDLRGERYDQ…GSGATIVNFK (76 aa).

Belongs to the DNA mismatch repair MutS family. MutS2 subfamily. Homodimer. Binds to stalled ribosomes, contacting rRNA.

Endonuclease that is involved in the suppression of homologous recombination and thus may have a key role in the control of bacterial genetic diversity. Its function is as follows. Acts as a ribosome collision sensor, splitting the ribosome into its 2 subunits. Detects stalled/collided 70S ribosomes which it binds and splits by an ATP-hydrolysis driven conformational change. Acts upstream of the ribosome quality control system (RQC), a ribosome-associated complex that mediates the extraction of incompletely synthesized nascent chains from stalled ribosomes and their subsequent degradation. Probably generates substrates for RQC. The sequence is that of Endonuclease MutS2 from Lacticaseibacillus casei (strain BL23) (Lactobacillus casei).